Consider the following 342-residue polypeptide: NAD kinase (342 aa).

Asp-66 functions as the Proton acceptor in the catalytic mechanism. NAD(+)-binding positions include 66-67 (DG), Arg-71, 141-142 (ND), Lys-152, Asp-171, 182-187 (TAYAFS), and Ala-206.

Belongs to the NAD kinase family. It depends on a divalent metal cation as a cofactor.

It localises to the cytoplasm. It carries out the reaction NAD(+) + ATP = ADP + NADP(+) + H(+). Functionally, involved in the regulation of the intracellular balance of NAD and NADP, and is a key enzyme in the biosynthesis of NADP. Catalyzes specifically the phosphorylation on 2'-hydroxyl of the adenosine moiety of NAD to yield NADP. The sequence is that of NAD kinase from Bifidobacterium longum (strain NCC 2705).